An 834-amino-acid chain; its full sequence is Phenylalanine--tRNA ligase beta subunit (834 aa).

Positions 48-159 (GDIERPLVVG…GTAEPGTDAN (112 aa)) constitute a tRNA-binding domain. In terms of domain architecture, B5 spans 411–492 (PAPEPIRMDI…RLEGLEQIPS (82 aa)). 4 residues coordinate Mg(2+): Asp470, Asp476, Glu479, and Glu480. The FDX-ACB domain maps to 740–833 (SPFPAVLQDV…AADAVGAVLR (94 aa)).

The protein belongs to the phenylalanyl-tRNA synthetase beta subunit family. Type 1 subfamily. In terms of assembly, tetramer of two alpha and two beta subunits. Mg(2+) serves as cofactor.

The protein resides in the cytoplasm. The enzyme catalyses tRNA(Phe) + L-phenylalanine + ATP = L-phenylalanyl-tRNA(Phe) + AMP + diphosphate + H(+). The polypeptide is Phenylalanine--tRNA ligase beta subunit (Nocardia farcinica (strain IFM 10152)).